A 295-amino-acid chain; its full sequence is MDQKQIEEIVRSVMASMGQAAPAPSEAKCATTNCAAPVTSESCALDLGSAEAKAWIGVENPHRADVLTELRRSTVARVCTGRAGPRPRTQALLRFLADHSRSKDTVLKEVPEEWVKAQGLLEVRSEISDKNLYLTRPDMGRRLCAEAVEALKAQCVANPDVQVVISDGLSTDAITVNYEEILPPLMAGLKQAGLKVGTPFFVRYGRVKIEDQIGEILGAKVVILLVGERPGLGQSESLSCYAVYSPRMATTVEADRTCISNIHQGGTPPVEAAAVIVDLAKRMLEQKASGINMTR.

3 residues coordinate adenosylcob(III)alamin: valine 207, glutamate 228, and cysteine 258.

This sequence belongs to the EutC family. In terms of assembly, the basic unit is a heterodimer which dimerizes to form tetramers. The heterotetramers trimerize; 6 large subunits form a core ring with 6 small subunits projecting outwards. It depends on adenosylcob(III)alamin as a cofactor.

It is found in the bacterial microcompartment. It catalyses the reaction ethanolamine = acetaldehyde + NH4(+). Its pathway is amine and polyamine degradation; ethanolamine degradation. Catalyzes the deamination of various vicinal amino-alcohols to oxo compounds. Allows this organism to utilize ethanolamine as the sole source of nitrogen and carbon in the presence of external vitamin B12. The sequence is that of Ethanolamine ammonia-lyase small subunit from Escherichia coli (strain UTI89 / UPEC).